Reading from the N-terminus, the 99-residue chain is Large ribosomal subunit protein eL30 (99 aa).

The protein belongs to the eukaryotic ribosomal protein eL30 family.

The polypeptide is Large ribosomal subunit protein eL30 (Methanobrevibacter smithii (strain ATCC 35061 / DSM 861 / OCM 144 / PS)).